A 1059-amino-acid polypeptide reads, in one-letter code: Pleckstrin homology domain-containing family M member 1 (1059 aa).

The RUN domain maps to 40-182 (TSEDGDANTM…LSFELSYKSA (143 aa)). Residue S218 is modified to Phosphoserine. 3 disordered regions span residues 218–244 (SLDS…RRDR), 272–334 (LQEN…TPMF), and 354–411 (SEEP…DQGS). 2 stretches are compositionally biased toward polar residues: residues 313–334 (SKAQ…TPMF) and 392–401 (GSTSDQQPSS). 3 positions are modified to phosphoserine: S430, S433, and S488. The PH 1 domain occupies 536–627 (GLMKLGTVAR…WLDRVREALQ (92 aa)). Residues 634-640 (EEEWVNI) carry the LIR motif. The interaction with RAB7A stretch occupies residues 657-1059 (LPPYSALLPE…RKYQEQNTVS (403 aa)). In terms of domain architecture, PH 2 spans 686–780 (DAIKESLLYL…WRDLVRKVLA (95 aa)). The Phorbol-ester/DAG-type zinc-finger motif lies at 989–1043 (QHVYHCDLCTQRGFICQICHHQDIIFPFEFDTTVRCAECRTVFHQSCQAVVRKGC).

In terms of assembly, interacts (via N- and C-terminus) with RAB7A (GTP-bound form). Simultaneously interacts with RAB7A and ARL8B; bringing about clustering and fusion of late endosomes and lysosomes. Interacts (via RUN domain) with ARL8B (GTP-bound form); the interaction is required for PLEKHM1 localization to lysosomes and for ARL8B function in delivery and degradation of endocytic and autophagic cargo in lysosomes. PLEKHM1 and PLEKHM2 compete for interaction with ARL8B. Interacts with ARL8A; the interaction is weaker than with ARL8B. Interacts with VPS41, VPS11, VPS18, VPS33A and VPS39; indicative for an association with the HOPS complex; the interactions with, at least, VPS41, VPS11, VPS18 and VPS33A require ARL8B. Interacts with GABARAP, GABARAPL, GABARAPL2, MAP1LC3A, MAP1LC3B and MAP1LC3C. Interacts with PAFAH1B. Interacts (via N- and C-terminus) with NDEL1. Interacts (via C-terminus) with MAP3K7. Interacts (via N- and C-terminus) with FAM98A. Interacts (via C-terminus) with DEF8; this interaction is weak but increased in a RAB7A-dependent manner. May interact with sialyl-lex-positive protein. As to expression, expressed in testis, skeletal muscle, lung, liver, spleen, brain, heart, kidney and bone. Weakly expressed in monocytes (at protein level).

The protein localises to the autolysosome membrane. Its subcellular location is the endosome membrane. The protein resides in the late endosome membrane. It is found in the lysosome membrane. In terms of biological role, acts as a multivalent adapter protein that regulates Rab7-dependent and HOPS complex-dependent fusion events in the endolysosomal system and couples autophagic and the endocytic trafficking pathways. Acts as a dual effector of RAB7A and ARL8B that simultaneously binds these GTPases, bringing about clustering and fusion of late endosomes and lysosomes. Required for late stages of endolysosomal maturation, facilitating both endocytosis-mediated degradation of growth factor receptors and autophagosome clearance. Interaction with Arl8b is a crucial factor in the terminal maturation of autophagosomes and to mediate autophagosome-lysosome fusion. Positively regulates lysosome peripheral distribution and ruffled border formation in osteoclasts. May be involved in negative regulation of endocytic transport from early endosome to late endosome/lysosome implicating its association with Rab7. May have a role in sialyl-lex-mediated transduction of apoptotic signals. Involved in bone resorption. The sequence is that of Pleckstrin homology domain-containing family M member 1 from Rattus norvegicus (Rat).